We begin with the raw amino-acid sequence, 310 residues long: Very-long-chain enoyl-CoA reductase (310 aa).

The Cytoplasmic portion of the chain corresponds to Met-1–Arg-85. The helical transmembrane segment at Leu-86–Ser-106 threads the bilayer. The Lumenal portion of the chain corresponds to Thr-107 to Arg-141. Residues Leu-142 to Phe-162 traverse the membrane as a helical segment. Topologically, residues Lys-163–Cys-165 are cytoplasmic. A helical transmembrane segment spans residues Phe-166 to Phe-186. The Lumenal segment spans residues Gly-187–Asp-201. Residues Asp-202–Ile-222 form a helical membrane-spanning segment. The Cytoplasmic portion of the chain corresponds to Lys-223–Pro-242. Residues Leu-243–Trp-265 traverse the membrane as a helical segment. The Lumenal portion of the chain corresponds to Phe-266–Phe-268. Residues Val-269–Ala-291 form a helical membrane-spanning segment. The Cytoplasmic portion of the chain corresponds to Gln-292–Phe-310.

Belongs to the steroid 5-alpha reductase family. Interacts with the fatty acid elongation system components ELO2 and ELO3. Interacts with NVJ1.

Its subcellular location is the endoplasmic reticulum membrane. The catalysed reaction is a very-long-chain 2,3-saturated fatty acyl-CoA + NADP(+) = a very-long-chain (2E)-enoyl-CoA + NADPH + H(+). It catalyses the reaction octadecanoyl-CoA + NADP(+) = (2E)-octadecenoyl-CoA + NADPH + H(+). It carries out the reaction (2E)-eicosenoyl-CoA + NADPH + H(+) = eicosanoyl-CoA + NADP(+). The enzyme catalyses (2E)-docosenoyl-CoA + NADPH + H(+) = docosanoyl-CoA + NADP(+). The catalysed reaction is (2E)-tetracosenoyl-CoA + NADPH + H(+) = tetracosanoyl-CoA + NADP(+). It catalyses the reaction (2E)-hexacosenoyl-CoA + NADPH + H(+) = hexacosanoyl-CoA + NADP(+). It functions in the pathway lipid metabolism; fatty acid biosynthesis. Catalyzes the last of the four reactions of the long-chain fatty acids elongation cycle. This endoplasmic reticulum-bound enzymatic process, allows the addition of 2 carbons to the chain of long- and very long-chain fatty acids/VLCFAs per cycle. This enzyme reduces the trans-2,3-enoyl-CoA fatty acid intermediate to an acyl-CoA that can be further elongated by entering a new cycle of elongation. Thereby, it participates in the production of VLCFAs of different chain lengths that are involved in multiple biological processes as precursors of membrane lipids and lipid mediators. VLCFAs serve for instance as precursors for ceramide and sphingolipids. Required for normal biogenesis of piecemeal microautophagy of the nucleus (PMN) bleps and vesicles during nutrient stress. The polypeptide is Very-long-chain enoyl-CoA reductase (TSC13) (Saccharomyces cerevisiae (strain ATCC 204508 / S288c) (Baker's yeast)).